A 71-amino-acid polypeptide reads, in one-letter code: MKQGIHPNYHEVNVTCSCGNKFATKSAMEKENFNIEVCSLCHPFYTGTQKIVDTTGRVDKFNNKFGNLFKR.

Zn(2+) contacts are provided by Cys16, Cys18, Cys38, and Cys41.

It belongs to the bacterial ribosomal protein bL31 family. Type A subfamily. As to quaternary structure, part of the 50S ribosomal subunit. The cofactor is Zn(2+).

In terms of biological role, binds the 23S rRNA. This chain is Large ribosomal subunit protein bL31, found in Neisseria meningitidis serogroup A / serotype 4A (strain DSM 15465 / Z2491).